The sequence spans 139 residues: Actin-depolymerizing factor 4 (139 aa).

One can recognise an ADF-H domain in the interval serine 5 to lysine 139.

It belongs to the actin-binding proteins ADF family. As to quaternary structure, interacts with LECRK1 (via kinase domain).

It is found in the cytoplasm. Its subcellular location is the cytoskeleton. Actin-depolymerizing protein. Severs actin filaments (F-actin) and binds to actin monomers. Involved in innate immunity. Required for the expression of defense-related genes PR1A, LOX2 and CHS1 upon biotic stresses. Required for basal resistance to the fungal blast (Magnaporthe grisea), bacterial blight (Xanthomonas oryzae pv. oryzae, Xoo) and the herbivorous insect brown planthopper (Nilaparvata lugens, BPH). Involved in the promotion of seed germination. Required for the expression of alpha-amylase genes during seed germination. The chain is Actin-depolymerizing factor 4 (ADF4) from Oryza sativa subsp. japonica (Rice).